The sequence spans 415 residues: Phosphopentomutase (415 aa).

Positions 10, 313, 318, 354, 355, and 366 each coordinate Mn(2+).

The protein belongs to the phosphopentomutase family. The cofactor is Mn(2+).

The protein resides in the cytoplasm. The catalysed reaction is 2-deoxy-alpha-D-ribose 1-phosphate = 2-deoxy-D-ribose 5-phosphate. It catalyses the reaction alpha-D-ribose 1-phosphate = D-ribose 5-phosphate. The protein operates within carbohydrate degradation; 2-deoxy-D-ribose 1-phosphate degradation; D-glyceraldehyde 3-phosphate and acetaldehyde from 2-deoxy-alpha-D-ribose 1-phosphate: step 1/2. Functionally, isomerase that catalyzes the conversion of deoxy-ribose 1-phosphate (dRib-1-P) and ribose 1-phosphate (Rib-1-P) to deoxy-ribose 5-phosphate (dRib-5-P) and ribose 5-phosphate (Rib-5-P), respectively. This chain is Phosphopentomutase, found in Psychromonas ingrahamii (strain DSM 17664 / CCUG 51855 / 37).